The sequence spans 327 residues: Protein CONSERVED IN THE GREEN LINEAGE AND DIATOMS 27, chloroplastic (327 aa).

A chloroplast-targeting transit peptide spans 1–59; that stretch reads MLRLIVNYPLIPKISHRVCSNSSSKLGSYYDSSSIIKYGGISDVVGKKQELFLSVSVKA. Residues 66-88 form a disordered region; the sequence is NGGGSMSFSGQSWDPSSEIEVPS. A run of 3 helical transmembrane segments spans residues 119–139, 148–168, and 225–245; these read LGGLWLVTFTVLGVPVAAASF, FILAAGTGTLFLVSLIVLRIY, and LIGTGALLVSAFVLFVFATPV.

In terms of tissue distribution, mostly expressed in seeds, leaves and flowers, and, to a lower extent, in roots.

It is found in the membrane. It localises to the plastid. The protein resides in the chloroplast. In terms of biological role, required for growth in low iron conditions. This chain is Protein CONSERVED IN THE GREEN LINEAGE AND DIATOMS 27, chloroplastic, found in Arabidopsis thaliana (Mouse-ear cress).